Consider the following 414-residue polypeptide: Serine hydroxymethyltransferase (414 aa).

Residues Leu-121 and Gly-125–Leu-127 contribute to the (6S)-5,6,7,8-tetrahydrofolate site. Lys-229 is subject to N6-(pyridoxal phosphate)lysine.

It belongs to the SHMT family. As to quaternary structure, homodimer. Requires pyridoxal 5'-phosphate as cofactor.

Its subcellular location is the cytoplasm. It catalyses the reaction (6R)-5,10-methylene-5,6,7,8-tetrahydrofolate + glycine + H2O = (6S)-5,6,7,8-tetrahydrofolate + L-serine. The protein operates within one-carbon metabolism; tetrahydrofolate interconversion. It functions in the pathway amino-acid biosynthesis; glycine biosynthesis; glycine from L-serine: step 1/1. Catalyzes the reversible interconversion of serine and glycine with tetrahydrofolate (THF) serving as the one-carbon carrier. This reaction serves as the major source of one-carbon groups required for the biosynthesis of purines, thymidylate, methionine, and other important biomolecules. Also exhibits THF-independent aldolase activity toward beta-hydroxyamino acids, producing glycine and aldehydes, via a retro-aldol mechanism. The chain is Serine hydroxymethyltransferase from Polaromonas sp. (strain JS666 / ATCC BAA-500).